Here is a 776-residue protein sequence, read N- to C-terminus: 5-methyltetrahydropteroyltriglutamate--homocysteine methyltransferase (776 aa).

Residues 13-16 (RELK) and Lys127 contribute to the 5-methyltetrahydropteroyltri-L-glutamate site. L-homocysteine is bound by residues 450 to 452 (IGS) and Glu503. Residues 450–452 (IGS) and Glu503 contribute to the L-methionine site. Trp580 is a binding site for 5-methyltetrahydropteroyltri-L-glutamate. Residue Asp618 participates in L-homocysteine binding. Asp618 serves as a coordination point for L-methionine. Glu624 provides a ligand contact to 5-methyltetrahydropteroyltri-L-glutamate. The Zn(2+) site is built by His660, Cys662, and Glu684. The active-site Proton donor is His713. Cys745 provides a ligand contact to Zn(2+).

This sequence belongs to the vitamin-B12 independent methionine synthase family. Zn(2+) serves as cofactor.

The catalysed reaction is 5-methyltetrahydropteroyltri-L-glutamate + L-homocysteine = tetrahydropteroyltri-L-glutamate + L-methionine. The protein operates within amino-acid biosynthesis; L-methionine biosynthesis via de novo pathway; L-methionine from L-homocysteine (MetE route): step 1/1. Its function is as follows. Catalyzes the transfer of a methyl group from 5-methyltetrahydrofolate to homocysteine resulting in methionine formation. This is 5-methyltetrahydropteroyltriglutamate--homocysteine methyltransferase from Mesorhizobium japonicum (strain LMG 29417 / CECT 9101 / MAFF 303099) (Mesorhizobium loti (strain MAFF 303099)).